The sequence spans 458 residues: UDP-N-acetylmuramoylalanine--D-glutamate ligase (458 aa).

Residue 124 to 130 (GSDGKTT) participates in ATP binding.

This sequence belongs to the MurCDEF family.

Its subcellular location is the cytoplasm. It catalyses the reaction UDP-N-acetyl-alpha-D-muramoyl-L-alanine + D-glutamate + ATP = UDP-N-acetyl-alpha-D-muramoyl-L-alanyl-D-glutamate + ADP + phosphate + H(+). It participates in cell wall biogenesis; peptidoglycan biosynthesis. Cell wall formation. Catalyzes the addition of glutamate to the nucleotide precursor UDP-N-acetylmuramoyl-L-alanine (UMA). The chain is UDP-N-acetylmuramoylalanine--D-glutamate ligase from Clostridium tetani (strain Massachusetts / E88).